A 114-amino-acid polypeptide reads, in one-letter code: Large ribosomal subunit protein bL20 (114 aa).

It belongs to the bacterial ribosomal protein bL20 family.

Functionally, binds directly to 23S ribosomal RNA and is necessary for the in vitro assembly process of the 50S ribosomal subunit. It is not involved in the protein synthesizing functions of that subunit. The polypeptide is Large ribosomal subunit protein bL20 (Parabacteroides distasonis (strain ATCC 8503 / DSM 20701 / CIP 104284 / JCM 5825 / NCTC 11152)).